Reading from the N-terminus, the 562-residue chain is Probable malate:quinone oxidoreductase (562 aa).

The disordered stretch occupies residues 535-562 (SATPADPTIAPKNQHSTTYNANSEMQAL). Residues 545-562 (PKNQHSTTYNANSEMQAL) are compositionally biased toward polar residues.

Belongs to the MQO family. FAD is required as a cofactor.

The catalysed reaction is (S)-malate + a quinone = a quinol + oxaloacetate. It functions in the pathway carbohydrate metabolism; tricarboxylic acid cycle; oxaloacetate from (S)-malate (quinone route): step 1/1. In Xylella fastidiosa (strain M23), this protein is Probable malate:quinone oxidoreductase.